The sequence spans 222 residues: Large ribosomal subunit protein mL64 (222 aa).

Disordered stretches follow at residues 1 to 51 (MAAP…PRWQ), 136 to 170 (RRQQ…HVDP), and 182 to 222 (LEKQ…TPDS). Residues 141–170 (ARREKAQADKERRARLQAEAQERLGYHVDP) show a composition bias toward basic and acidic residues. Residues 144 to 213 (EKAQADKERR…AAMAAAAAQD (70 aa)) are a coiled coil. The Nuclear localization signal signature appears at 184-200 (KQHRKRLKEEKQRKKKE). The span at 203–212 (AAAMAAAAAQ) shows a compositional bias: low complexity.

The protein belongs to the mitochondrion-specific ribosomal protein mL64 family. As to quaternary structure, component of the mitochondrial ribosome large subunit (39S) which comprises a 16S rRNA and about 50 distinct proteins. Interacts with GADD45A, GADD45B and GADD45G. Interacts with NR4A1 via the NR4A1 AB domain. Interacts with ATAD3A and ATAD3B.

It localises to the mitochondrion. The protein resides in the nucleus. In terms of biological role, acts as a negative regulator of G1 to S cell cycle phase progression by inhibiting cyclin-dependent kinases. Inhibitory effects are additive with GADD45 proteins but also occur in the absence of GADD45 proteins. Acts as a repressor of the orphan nuclear receptor NR4A1 by inhibiting AB domain-mediated transcriptional activity. May be involved in the hormone-mediated regulation of NR4A1 transcriptional activity. May play a role in mitochondrial protein synthesis. The protein is Large ribosomal subunit protein mL64 (GADD45GIP1) of Bos taurus (Bovine).